The sequence spans 255 residues: Coiled-coil domain-containing 92B (255 aa).

Residues 28–90 (LRDLHLEILR…AAANAELRRE (63 aa)) are a coiled coil. Residues 149 to 255 (QRLQAPRPGP…SQPSAPGDPE (107 aa)) form a disordered region. Positions 166–177 (PRRRALRARRPP) are enriched in basic residues. A compositionally biased stretch (pro residues) spans 242 to 255 (QPAPSQPSAPGDPE).

This Homo sapiens (Human) protein is Coiled-coil domain-containing 92B.